Consider the following 129-residue polypeptide: Photosystem II extrinsic protein V (129 aa).

Residues Cys-35, Cys-38, His-39, and His-90 each contribute to the heme c site.

Belongs to the cytochrome c family. PsbV subfamily. As to quaternary structure, PSII is composed of 1 copy each of membrane proteins PsbA, PsbB, PsbC, PsbD, PsbE, PsbF, PsbH, PsbI, PsbJ, PsbK, PsbL, PsbM, PsbT, PsbX, PsbY, PsbZ, Psb30/Ycf12, peripheral proteins PsbO, CyanoQ (PsbQ), PsbU, PsbV and a large number of cofactors. It forms dimeric complexes. Homodimer in crystal structure. It depends on heme c as a cofactor.

The protein localises to the cellular thylakoid membrane. Functionally, one of the extrinsic, lumenal subunits of photosystem II (PSII). PSII is a light-driven water plastoquinone oxidoreductase, using light energy to abstract electrons from H(2)O, generating a proton gradient subsequently used for ATP formation. The extrinsic proteins stabilize the structure of photosystem II oxygen-evolving complex (OEC), the ion environment of oxygen evolution and protect the OEC against heat-induced inactivation. Low-potential cytochrome c that plays a role in the OEC of PSII. The sequence is that of Photosystem II extrinsic protein V from Limnospira maxima (Arthrospira maxima).